The chain runs to 367 residues: Chorismate synthase (367 aa).

Residues arginine 48 and arginine 54 each contribute to the NADP(+) site. Residues 125–127 (RSS), 238–239 (NA), glycine 278, 293–297 (KPTSS), and arginine 319 each bind FMN.

The protein belongs to the chorismate synthase family. In terms of assembly, homotetramer. FMNH2 is required as a cofactor.

The enzyme catalyses 5-O-(1-carboxyvinyl)-3-phosphoshikimate = chorismate + phosphate. Its pathway is metabolic intermediate biosynthesis; chorismate biosynthesis; chorismate from D-erythrose 4-phosphate and phosphoenolpyruvate: step 7/7. Its function is as follows. Catalyzes the anti-1,4-elimination of the C-3 phosphate and the C-6 proR hydrogen from 5-enolpyruvylshikimate-3-phosphate (EPSP) to yield chorismate, which is the branch point compound that serves as the starting substrate for the three terminal pathways of aromatic amino acid biosynthesis. This reaction introduces a second double bond into the aromatic ring system. The sequence is that of Chorismate synthase from Xanthomonas campestris pv. campestris (strain 8004).